A 224-amino-acid polypeptide reads, in one-letter code: tRNA (guanine-N(7)-)-methyltransferase (224 aa).

Glu-54, Glu-79, Glu-106, and Asp-129 together coordinate S-adenosyl-L-methionine. Asp-129 is a catalytic residue. Lys-133 and Asp-165 together coordinate substrate.

It belongs to the class I-like SAM-binding methyltransferase superfamily. TrmB family.

The enzyme catalyses guanosine(46) in tRNA + S-adenosyl-L-methionine = N(7)-methylguanosine(46) in tRNA + S-adenosyl-L-homocysteine. It functions in the pathway tRNA modification; N(7)-methylguanine-tRNA biosynthesis. In terms of biological role, catalyzes the formation of N(7)-methylguanine at position 46 (m7G46) in tRNA. This Chlamydia caviae (strain ATCC VR-813 / DSM 19441 / 03DC25 / GPIC) (Chlamydophila caviae) protein is tRNA (guanine-N(7)-)-methyltransferase.